We begin with the raw amino-acid sequence, 343 residues long: tRNA N6-adenosine threonylcarbamoyltransferase (343 aa).

Fe cation contacts are provided by H114 and H118. Substrate contacts are provided by residues 137 to 141 (LVSGG), D171, G184, D188, and N278. D306 lines the Fe cation pocket.

The protein belongs to the KAE1 / TsaD family. It depends on Fe(2+) as a cofactor.

It is found in the cytoplasm. It catalyses the reaction L-threonylcarbamoyladenylate + adenosine(37) in tRNA = N(6)-L-threonylcarbamoyladenosine(37) in tRNA + AMP + H(+). Functionally, required for the formation of a threonylcarbamoyl group on adenosine at position 37 (t(6)A37) in tRNAs that read codons beginning with adenine. Is involved in the transfer of the threonylcarbamoyl moiety of threonylcarbamoyl-AMP (TC-AMP) to the N6 group of A37, together with TsaE and TsaB. TsaD likely plays a direct catalytic role in this reaction. The chain is tRNA N6-adenosine threonylcarbamoyltransferase from Acidothermus cellulolyticus (strain ATCC 43068 / DSM 8971 / 11B).